The following is a 313-amino-acid chain: 4-diphosphocytidyl-2-C-methyl-D-erythritol kinase (313 aa).

Residue lysine 27 is part of the active site. 110-120 (PIGGGVGGGSS) serves as a coordination point for ATP. Aspartate 152 is a catalytic residue.

This sequence belongs to the GHMP kinase family. IspE subfamily.

The catalysed reaction is 4-CDP-2-C-methyl-D-erythritol + ATP = 4-CDP-2-C-methyl-D-erythritol 2-phosphate + ADP + H(+). The protein operates within isoprenoid biosynthesis; isopentenyl diphosphate biosynthesis via DXP pathway; isopentenyl diphosphate from 1-deoxy-D-xylulose 5-phosphate: step 3/6. In terms of biological role, catalyzes the phosphorylation of the position 2 hydroxy group of 4-diphosphocytidyl-2C-methyl-D-erythritol. This Histophilus somni (strain 2336) (Haemophilus somnus) protein is 4-diphosphocytidyl-2-C-methyl-D-erythritol kinase.